A 97-amino-acid polypeptide reads, in one-letter code: Co-chaperonin GroES (97 aa).

It belongs to the GroES chaperonin family. As to quaternary structure, heptamer of 7 subunits arranged in a ring. Interacts with the chaperonin GroEL.

It is found in the cytoplasm. In terms of biological role, together with the chaperonin GroEL, plays an essential role in assisting protein folding. The GroEL-GroES system forms a nano-cage that allows encapsulation of the non-native substrate proteins and provides a physical environment optimized to promote and accelerate protein folding. GroES binds to the apical surface of the GroEL ring, thereby capping the opening of the GroEL channel. The polypeptide is Co-chaperonin GroES (Pectobacterium atrosepticum (strain SCRI 1043 / ATCC BAA-672) (Erwinia carotovora subsp. atroseptica)).